The chain runs to 356 residues: Protein pelota homolog (356 aa).

The protein belongs to the eukaryotic release factor 1 family. Pelota subfamily. Monomer. A divalent metal cation serves as cofactor.

The protein localises to the cytoplasm. May function in recognizing stalled ribosomes, interact with stem-loop structures in stalled mRNA molecules, and effect endonucleolytic cleavage of the mRNA. May play a role in the release non-functional ribosomes and degradation of damaged mRNAs. Has endoribonuclease activity. This Pyrococcus horikoshii (strain ATCC 700860 / DSM 12428 / JCM 9974 / NBRC 100139 / OT-3) protein is Protein pelota homolog.